The primary structure comprises 152 residues: Alpha-amylase inhibitor BDAI-1 (152 aa).

A signal peptide spans 1-30 (MGAMWMKSMLLVLLLCMLMVTPMTGARSDN).

Belongs to the protease inhibitor I6 (cereal trypsin/alpha-amylase inhibitor) family. Homodimer. Post-translationally, five disulfide bonds, which are essential for the inhibitor activity, are probably present. Endosperm.

It localises to the secreted. Its function is as follows. Could be involved in insect defense mechanisms. Inhibits insect-type alpha-amylase. In Hordeum vulgare (Barley), this protein is Alpha-amylase inhibitor BDAI-1 (IAD1).